We begin with the raw amino-acid sequence, 728 residues long: tRNA (guanine(27)-N(2))-dimethyltransferase (728 aa).

A compositionally biased stretch (acidic residues) spans 1–10; the sequence is MENMAEEELL. 2 disordered regions span residues 1 to 78 and 98 to 118; these read MENM…SKRH and DVDS…SQTC. Thr23 is modified (phosphothreonine). Positions 23 to 33 are enriched in pro residues; it reads TPAPDSAPVPA. Over residues 34-46 the composition is skewed to low complexity; sequence PAADTALDSAPTP. A compositionally biased stretch (pro residues) spans 47–61; it reads DSDPAPALAPAPAPA. Ser63 carries the post-translational modification Phosphoserine. A compositionally biased stretch (polar residues) spans 101–118; that stretch reads SASSLNSDNPGTENSQTC. Residues 132 to 136 carry the Nucleolar localization signal motif; sequence HKLRR. The C2H2-type zinc-finger motif lies at 181 to 203; it reads YHCIICSATITRRTDMLGHVKRH. One can recognise a Trm1 methyltransferase domain in the interval 224–683; it reads EILKETDTDI…APLMQFKSIL (460 aa). The S-adenosyl-L-methionine site is built by Arg257, Asp304, Asp352, and Ala353. Zn(2+) contacts are provided by Cys483, Cys486, Cys508, and Cys510. A Glycyl lysine isopeptide (Lys-Gly) (interchain with G-Cter in SUMO2) cross-link involves residue Lys580. Position 607 is a phosphoserine (Ser607). The interval 693-728 is disordered; that stretch reads GAQSEGQMPPAAEDTVTDRVEMSVSDKAEASGCRRW. A compositionally biased stretch (basic and acidic residues) spans 708-721; that stretch reads VTDRVEMSVSDKAE.

The protein belongs to the class I-like SAM-binding methyltransferase superfamily. Trm1 family. In terms of tissue distribution, expressed in various neuronal structures during embryonic development, including spinal ganglia, trigeminal nerve and ganglion, olfactory and nasopharyngeal epithelium, nuclei of the metencephalon, thalamus and medulla oblongata. Also expressed in lung, esophagus, epiglottis, ependyma, vertebral column, spinal cord and brown adipose tissue. Expression persists in the adult brain with dynamically changing patterns in cortex and cerebellum.

It localises to the nucleus. The protein resides in the nucleolus. It catalyses the reaction guanosine(27) in tRNA(Tyr) + 2 S-adenosyl-L-methionine = N(2)-dimethylguanosine(27) in tRNA(Tyr) + 2 S-adenosyl-L-homocysteine + 2 H(+). Its function is as follows. Specifically dimethylates a single guanine residue at position 27 of tRNA(Tyr) using S-adenosyl-L-methionine as donor of the methyl groups. Dimethylation at position 27 of tRNA(Tyr) is required for efficient translation of tyrosine codons. Also required to maintain 3-(3-amino-3-carboxypropyl)uridine (acp3U) in the D-loop of several cytoplasmic tRNAs. May play a role in motor coordination and exploratory behavior. The chain is tRNA (guanine(27)-N(2))-dimethyltransferase from Mus musculus (Mouse).